Consider the following 1654-residue polypeptide: Mediator of RNA polymerase II transcription subunit 12 (1654 aa).

Disordered regions lie at residues 52–72 and 1481–1530; these read DLNGDNSRSQHTAGSGVLSGN and SKQT…SFQT. Over residues 1515–1530 the composition is skewed to polar residues; it reads PLSSARPSSEAASFQT.

It belongs to the Mediator complex subunit 12 family. As to quaternary structure, component of the SRB8-11 complex, which itself associates with the Mediator complex.

The protein localises to the nucleus. Functionally, component of the SRB8-11 complex. The SRB8-11 complex is a regulatory module of the Mediator complex which is itself involved in regulation of basal and activated RNA polymerase II-dependent transcription. The SRB8-11 complex may be involved in the transcriptional repression of a subset of genes regulated by Mediator. It may inhibit the association of the Mediator complex with RNA polymerase II to form the holoenzyme complex. This Scheffersomyces stipitis (strain ATCC 58785 / CBS 6054 / NBRC 10063 / NRRL Y-11545) (Yeast) protein is Mediator of RNA polymerase II transcription subunit 12 (SRB8).